The chain runs to 295 residues: Glutamyl-Q tRNA(Asp) synthetase (295 aa).

L-glutamate is bound by residues 9–13 (RFAPT) and glutamate 45. The 'HIGH' region signature appears at 12-22 (PTPSGFLHFGS). 4 residues coordinate Zn(2+): cysteine 101, cysteine 103, tyrosine 115, and cysteine 119. 2 residues coordinate L-glutamate: tyrosine 172 and arginine 190. The 'KMSKS' region motif lies at 228–232 (KLGKS). Position 231 (lysine 231) interacts with ATP.

This sequence belongs to the class-I aminoacyl-tRNA synthetase family. GluQ subfamily. Requires Zn(2+) as cofactor.

Its function is as follows. Catalyzes the tRNA-independent activation of glutamate in presence of ATP and the subsequent transfer of glutamate onto a tRNA(Asp). Glutamate is transferred on the 2-amino-5-(4,5-dihydroxy-2-cyclopenten-1-yl) moiety of the queuosine in the wobble position of the QUC anticodon. This is Glutamyl-Q tRNA(Asp) synthetase from Pseudomonas putida (strain GB-1).